Here is a 182-residue protein sequence, read N- to C-terminus: Adenine phosphoribosyltransferase (182 aa).

The protein belongs to the purine/pyrimidine phosphoribosyltransferase family. In terms of assembly, homodimer.

The protein resides in the cytoplasm. The enzyme catalyses AMP + diphosphate = 5-phospho-alpha-D-ribose 1-diphosphate + adenine. Its pathway is purine metabolism; AMP biosynthesis via salvage pathway; AMP from adenine: step 1/1. In terms of biological role, catalyzes a salvage reaction resulting in the formation of AMP, that is energically less costly than de novo synthesis. The polypeptide is Adenine phosphoribosyltransferase (Streptomyces galbus).